The following is a 214-amino-acid chain: Octanoyltransferase (214 aa).

The BPL/LPL catalytic domain maps to 29 to 214 (SETLDEIWVL…QHLQKQLIPS (186 aa)). Substrate-binding positions include 69-76 (RGGEITYH), 146-148 (ALG), and 159-161 (GLA). C177 acts as the Acyl-thioester intermediate in catalysis.

Belongs to the LipB family.

The protein localises to the cytoplasm. It carries out the reaction octanoyl-[ACP] + L-lysyl-[protein] = N(6)-octanoyl-L-lysyl-[protein] + holo-[ACP] + H(+). Its pathway is protein modification; protein lipoylation via endogenous pathway; protein N(6)-(lipoyl)lysine from octanoyl-[acyl-carrier-protein]: step 1/2. Catalyzes the transfer of endogenously produced octanoic acid from octanoyl-acyl-carrier-protein onto the lipoyl domains of lipoate-dependent enzymes. Lipoyl-ACP can also act as a substrate although octanoyl-ACP is likely to be the physiological substrate. The protein is Octanoyltransferase of Polynucleobacter necessarius subsp. necessarius (strain STIR1).